The sequence spans 252 residues: Imidazole glycerol phosphate synthase subunit HisF (252 aa).

Residues aspartate 11 and aspartate 130 contribute to the active site.

Belongs to the HisA/HisF family. In terms of assembly, heterodimer of HisH and HisF.

Its subcellular location is the cytoplasm. It catalyses the reaction 5-[(5-phospho-1-deoxy-D-ribulos-1-ylimino)methylamino]-1-(5-phospho-beta-D-ribosyl)imidazole-4-carboxamide + L-glutamine = D-erythro-1-(imidazol-4-yl)glycerol 3-phosphate + 5-amino-1-(5-phospho-beta-D-ribosyl)imidazole-4-carboxamide + L-glutamate + H(+). The protein operates within amino-acid biosynthesis; L-histidine biosynthesis; L-histidine from 5-phospho-alpha-D-ribose 1-diphosphate: step 5/9. In terms of biological role, IGPS catalyzes the conversion of PRFAR and glutamine to IGP, AICAR and glutamate. The HisF subunit catalyzes the cyclization activity that produces IGP and AICAR from PRFAR using the ammonia provided by the HisH subunit. In Halothermothrix orenii (strain H 168 / OCM 544 / DSM 9562), this protein is Imidazole glycerol phosphate synthase subunit HisF.